The chain runs to 318 residues: Malate dehydrogenase (318 aa).

NAD(+) is bound by residues 10-15 (GGGQIG) and aspartate 34. The substrate site is built by arginine 83 and arginine 89. Residues asparagine 96 and 119-121 (LSN) each bind NAD(+). Residues asparagine 121 and arginine 152 each coordinate substrate. The active-site Proton acceptor is the histidine 176.

The protein belongs to the LDH/MDH superfamily. MDH type 3 family.

The enzyme catalyses (S)-malate + NAD(+) = oxaloacetate + NADH + H(+). Its function is as follows. Catalyzes the reversible oxidation of malate to oxaloacetate. This chain is Malate dehydrogenase, found in Syntrophotalea carbinolica (strain DSM 2380 / NBRC 103641 / GraBd1) (Pelobacter carbinolicus).